A 364-amino-acid chain; its full sequence is Mannonate dehydratase (364 aa).

Belongs to the mannonate dehydratase family. Fe(2+) is required as a cofactor. It depends on Mn(2+) as a cofactor.

The enzyme catalyses D-mannonate = 2-dehydro-3-deoxy-D-gluconate + H2O. It functions in the pathway carbohydrate metabolism; pentose and glucuronate interconversion. In terms of biological role, catalyzes the dehydration of D-mannonate. In Endomicrobium trichonymphae, this protein is Mannonate dehydratase.